Consider the following 91-residue polypeptide: Elongation factor 1-beta (91 aa).

It belongs to the EF-1-beta/EF-1-delta family.

Its function is as follows. Promotes the exchange of GDP for GTP in EF-1-alpha/GDP, thus allowing the regeneration of EF-1-alpha/GTP that could then be used to form the ternary complex EF-1-alpha/GTP/AAtRNA. The polypeptide is Elongation factor 1-beta (Sulfurisphaera tokodaii (strain DSM 16993 / JCM 10545 / NBRC 100140 / 7) (Sulfolobus tokodaii)).